Reading from the N-terminus, the 157-residue chain is Protein Smg (157 aa).

It belongs to the Smg family.

This Yersinia pestis (strain Pestoides F) protein is Protein Smg.